The chain runs to 296 residues: 6-hydroxypseudooxynicotine dehydrogenase complex subunit alpha (296 aa).

An FAD-binding PCMH-type domain is found at 1-177 (MKPPSFDYVV…VEVNVPQLPH (177 aa)). FAD is bound by residues 30–37 (IIAGGQSL), 111–115 (TIGGS), and Glu-124.

In terms of assembly, heterohexamer of 2 alpha (kdhA), 2 beta (kdhB) and 2 gamma (kdhC) subunit. Dimer of heterotrimers. Requires FAD as cofactor.

The enzyme catalyses 6-hydroxypseudooxynicotine + A + H2O = 2,6-dihydroxypseudooxynicotine + AH2. It participates in alkaloid degradation; nicotine degradation. Functionally, molybdo-flavoprotein enzyme complex involved in nicotine degradation. The subunit gamma (large subunit) contains the substrate-binding sites, the subunit alpha (medium subunit) binds FAD and the subunit beta (small subunit) has a 2Fe-2S ferredoxin-type domain which binds 2 2Fe-2S clusters. This chain is 6-hydroxypseudooxynicotine dehydrogenase complex subunit alpha (kdhA), found in Paenarthrobacter nicotinovorans (Arthrobacter nicotinovorans).